The following is a 441-amino-acid chain: Zinc finger and BTB domain-containing protein 26 (441 aa).

The region spanning 33-97 (CDVTVLIDDI…CYSGVLEFPE (65 aa)) is the BTB domain. Residues 134 to 177 (DSKEGCEPQSASPQSKEQQGDARGSPKQDSPCIHPSEDSMDMED) are disordered. Residue lysine 184 forms a Glycyl lysine isopeptide (Lys-Gly) (interchain with G-Cter in SUMO2) linkage. Positions 194–216 (VRSKKDQNQFISSEPTALHSSEP) are disordered. Polar residues predominate over residues 201 to 216 (NQFISSEPTALHSSEP). A Glycyl lysine isopeptide (Lys-Gly) (interchain with G-Cter in SUMO2) cross-link involves residue lysine 255. 4 consecutive C2H2-type zinc fingers follow at residues 273-295 (HQCPKCTRVFRHLENYANHLKMH), 298-320 (FMCLLCGKTFTQKGNLHRHMRVH), 326-348 (FQCKICGKTFSQKCSLQDHLNLH), and 354-377 (HKCNYCDMVFAHKPVLRKHLKQLH). Lysine 329 is covalently cross-linked (Glycyl lysine isopeptide (Lys-Gly) (interchain with G-Cter in SUMO2)).

Ubiquitous.

Its subcellular location is the nucleus. Functionally, may be involved in transcriptional regulation. The protein is Zinc finger and BTB domain-containing protein 26 (ZBTB26) of Homo sapiens (Human).